The following is a 593-amino-acid chain: Arginine--tRNA ligase (593 aa).

The 'HIGH' region motif lies at 138–148; sequence ANPTGPLHVGH.

It belongs to the class-I aminoacyl-tRNA synthetase family. In terms of assembly, monomer.

Its subcellular location is the cytoplasm. It carries out the reaction tRNA(Arg) + L-arginine + ATP = L-arginyl-tRNA(Arg) + AMP + diphosphate. This Burkholderia ambifaria (strain ATCC BAA-244 / DSM 16087 / CCUG 44356 / LMG 19182 / AMMD) (Burkholderia cepacia (strain AMMD)) protein is Arginine--tRNA ligase.